The following is a 225-amino-acid chain: uncharacterized protein (225 aa).

This is an uncharacterized protein from Schizosaccharomyces pombe (strain 972 / ATCC 24843) (Fission yeast).